The following is a 589-amino-acid chain: Polypeptide N-acetylgalactosaminyltransferase 4 (589 aa).

Over 1–11 (MLPRMLKMKTV) the chain is Cytoplasmic. Residues 12 to 31 (GTVLAVIWLFGLAFIYVQST) traverse the membrane as a helical; Signal-anchor for type II membrane protein segment. The Lumenal portion of the chain corresponds to 32 to 589 (SSSLRPPGRH…WIFEKLDTYE (558 aa)). The tract at residues 33 to 73 (SSLRPPGRHPPPLPQLDPLIPQNPPQNDEIRPKKSAPPIPT) is disordered. 5 cysteine pairs are disulfide-bonded: Cys140/Cys369, Cys360/Cys438, Cys471/Cys488, Cys514/Cys531, and Cys553/Cys571. The segment at 150–255 (MQPTTVIITY…QKWLEPLLAR (106 aa)) is catalytic subdomain A. Substrate-binding residues include Asp191 and Arg216. A Mn(2+)-binding site is contributed by Asp239. Ser240 provides a ligand contact to substrate. Position 241 (His241) interacts with Mn(2+). Residues 315 to 377 (PIRSPTMAGG…PCSRVGHVFR (63 aa)) form a catalytic subdomain B region. Position 346 (Trp346) interacts with substrate. His374 lines the Mn(2+) pocket. Arg377, His380, and Tyr382 together coordinate substrate. The region spanning 458-589 (TPGKSFQMKI…WIFEKLDTYE (132 aa)) is the Ricin B-type lectin domain. N-linked (GlcNAc...) asparagine glycosylation is present at Asn523.

This sequence belongs to the glycosyltransferase 2 family. GalNAc-T subfamily. It depends on Mn(2+) as a cofactor.

It is found in the golgi apparatus membrane. It catalyses the reaction L-seryl-[protein] + UDP-N-acetyl-alpha-D-galactosamine = a 3-O-[N-acetyl-alpha-D-galactosaminyl]-L-seryl-[protein] + UDP + H(+). It carries out the reaction L-threonyl-[protein] + UDP-N-acetyl-alpha-D-galactosamine = a 3-O-[N-acetyl-alpha-D-galactosaminyl]-L-threonyl-[protein] + UDP + H(+). The protein operates within protein modification; protein glycosylation. Functionally, catalyzes the initial reaction in O-linked oligosaccharide biosynthesis, the transfer of an N-acetyl-D-galactosamine residue to a serine or threonine residue on the protein receptor. This Caenorhabditis elegans protein is Polypeptide N-acetylgalactosaminyltransferase 4 (gly-4).